Here is a 543-residue protein sequence, read N- to C-terminus: Chaperonin GroEL (543 aa).

Residues 30–33, Lys-51, 87–91, Gly-415, and Asp-496 contribute to the ATP site; these read TLGP and DGTTT.

The protein belongs to the chaperonin (HSP60) family. As to quaternary structure, forms a cylinder of 14 subunits composed of two heptameric rings stacked back-to-back. Interacts with the co-chaperonin GroES.

It localises to the cytoplasm. The enzyme catalyses ATP + H2O + a folded polypeptide = ADP + phosphate + an unfolded polypeptide.. In terms of biological role, together with its co-chaperonin GroES, plays an essential role in assisting protein folding. The GroEL-GroES system forms a nano-cage that allows encapsulation of the non-native substrate proteins and provides a physical environment optimized to promote and accelerate protein folding. The chain is Chaperonin GroEL from Gluconobacter oxydans (strain 621H) (Gluconobacter suboxydans).